The chain runs to 211 residues: Ras-related protein RABB1c (211 aa).

Ser2 is subject to N-acetylserine. 13–21 (GDTGVGKSC) contributes to the GTP binding site. The short motif at 35–43 (HDLTIGVEF) is the Effector region element. Residues 61 to 65 (DTAGQ), 119 to 122 (NKCD), and 149 to 151 (SAK) contribute to the GTP site. S-geranylgeranyl cysteine attachment occurs at residues Cys209 and Cys210.

The protein belongs to the small GTPase superfamily. Rab family.

It is found in the cell membrane. Its function is as follows. Intracellular vesicle trafficking and protein transport. The sequence is that of Ras-related protein RABB1c (RABB1C) from Arabidopsis thaliana (Mouse-ear cress).